The sequence spans 284 residues: Bifunctional protein FolD 2 (284 aa).

NADP(+) is bound by residues 165–167 (GRG), Thr192, and Val233.

It belongs to the tetrahydrofolate dehydrogenase/cyclohydrolase family. Homodimer.

The enzyme catalyses (6R)-5,10-methylene-5,6,7,8-tetrahydrofolate + NADP(+) = (6R)-5,10-methenyltetrahydrofolate + NADPH. It carries out the reaction (6R)-5,10-methenyltetrahydrofolate + H2O = (6R)-10-formyltetrahydrofolate + H(+). The protein operates within one-carbon metabolism; tetrahydrofolate interconversion. Functionally, catalyzes the oxidation of 5,10-methylenetetrahydrofolate to 5,10-methenyltetrahydrofolate and then the hydrolysis of 5,10-methenyltetrahydrofolate to 10-formyltetrahydrofolate. This Streptomyces avermitilis (strain ATCC 31267 / DSM 46492 / JCM 5070 / NBRC 14893 / NCIMB 12804 / NRRL 8165 / MA-4680) protein is Bifunctional protein FolD 2.